Consider the following 71-residue polypeptide: Keratin-associated protein 6-1 (71 aa).

This sequence belongs to the KRTAP type 6 family. Interacts with hair keratins.

Its function is as follows. In the hair cortex, hair keratin intermediate filaments are embedded in an interfilamentous matrix, consisting of hair keratin-associated proteins (KRTAP), which are essential for the formation of a rigid and resistant hair shaft through their extensive disulfide bond cross-linking with abundant cysteine residues of hair keratins. The matrix proteins include the high-sulfur and high-glycine-tyrosine keratins. This is Keratin-associated protein 6-1 (KRTAP6-1) from Homo sapiens (Human).